A 694-amino-acid polypeptide reads, in one-letter code: GRB2-associated-binding protein 1 (694 aa).

The residue at position 2 (serine 2) is an N-acetylserine. One can recognise a PH domain in the interval 5-116 (EVVCSGWLRK…WVRCICDICG (112 aa)). Disordered regions lie at residues 122-164 (EDPV…PYQL) and 194-231 (PEPTRTHADSAKSTSSETDCNDNVPSHKNPASSQSKHG). Over residues 145–157 (APPSTQADSSSAT) the composition is skewed to polar residues. Basic and acidic residues predominate over residues 194–203 (PEPTRTHADS). A compositionally biased stretch (polar residues) spans 204–231 (AKSTSSETDCNDNVPSHKNPASSQSKHG). Residues serine 251, serine 253, serine 266, and serine 304 each carry the phosphoserine modification. The segment at 323 to 386 (FPEGTLGQTS…TAGMSPSRSN (64 aa)) is disordered. Over residues 362–386 (IPRTASDTDSSYCIPTAGMSPSRSN) the composition is skewed to polar residues. Threonine 387 is modified (phosphothreonine). 2 positions are modified to phosphoserine: serine 402 and serine 454. 2 disordered regions span residues 493-532 (AHMGFRSSPKTPPRRPVPVADCEPPPVDRNLKPDRKVKPA) and 544-656 (ELQA…ADER). Alanine 547 carries the phosphoserine modification. Residues 594–611 (PNLSSEDPNLFGSNSLDG) show a composition bias toward polar residues. Residue tyrosine 627 is modified to Phosphotyrosine. Position 638 is a phosphothreonine (threonine 638). Serine 651 bears the Phosphoserine mark. Tyrosine 659 bears the Phosphotyrosine mark. The disordered stretch occupies residues 671–694 (KSTREAWTDGRQSTESETPAKSVK). Basic and acidic residues predominate over residues 672 to 684 (STREAWTDGRQST). Residue serine 683 is modified to Phosphoserine. The segment covering 685–694 (ESETPAKSVK) has biased composition (polar residues).

The protein belongs to the GAB family. As to quaternary structure, identified in a complex containing FRS2, GRB2, GAB1, PIK3R1 and SOS1. Forms a tripartite complex containing GAB1, METTL13 and SPRY2. Within the complex interacts with METTL13. Interacts with GRB2 and with other SH2-containing proteins. Interacts with phosphorylated LAT2. Interacts with PTPRJ. Interacts (phosphorylated) with PTPN11. Interacts with HCK. Phosphorylated in response to FGFR1 activation. Phosphorylated on tyrosine residue(s) by the epidermal growth factor receptor (EGFR) and the insulin receptor (INSR). Tyrosine phosphorylation of GAB1 mediates interaction with several proteins that contain SH2 domains. Phosphorylated on tyrosine residues by HCK upon IL6 signaling.

Functionally, adapter protein that plays a role in intracellular signaling cascades triggered by activated receptor-type kinases. Plays a role in FGFR1 signaling. Probably involved in signaling by the epidermal growth factor receptor (EGFR) and the insulin receptor (INSR). Involved in the MET/HGF-signaling pathway. This is GRB2-associated-binding protein 1 (GAB1) from Homo sapiens (Human).